The sequence spans 174 residues: Repair DNA polymerase X (174 aa).

The tract at residues 42-51 is involved in ssDNA binding; it reads REEKMLNDVD. Mg(2+) contacts are provided by aspartate 49 and aspartate 51. Residues cysteine 81 and cysteine 86 are joined by a disulfide bond. Aspartate 100 contacts Mg(2+).

It belongs to the DNA polymerase type-X family. Mg(2+) serves as cofactor.

Its subcellular location is the virion. It carries out the reaction DNA(n) + a 2'-deoxyribonucleoside 5'-triphosphate = DNA(n+1) + diphosphate. Functionally, error-prone polymerase lacking a proofreading 3'-5' exonuclease which catalyzes the gap-filling reaction during the DNA repair process. Specifically binds intermediates in the single-nucleotide base-excision repair process. Also catalyzes DNA polymerization with low nucleotide-insertion fidelity. Probably acts as a strategic DNA mutase, which gives rise to a rapid emergence of variants. Generates mismatched G-G pairs, in that case, the polymerase first binds the deoxynucleotide followed by mismatch formation. Together with the viral DNA ligase, fills the single nucleotide gaps generated by the AP endonuclease. Binds DNA with high affinity via the helix alphaE. The chain is Repair DNA polymerase X from Ornithodoros (relapsing fever ticks).